The primary structure comprises 352 residues: uncharacterized protein (352 aa).

A signal peptide spans 1-21; the sequence is MNVDSRVFRFFLVFLILVVVA.

It belongs to the bacterial solute-binding protein 1 family. WtpA subfamily.

This is an uncharacterized protein from Methanosarcina acetivorans (strain ATCC 35395 / DSM 2834 / JCM 12185 / C2A).